Consider the following 576-residue polypeptide: Arginine--tRNA ligase (576 aa).

A 'HIGH' region motif is present at residues 123–133; the sequence is PNIGKEMHVGH.

This sequence belongs to the class-I aminoacyl-tRNA synthetase family. As to quaternary structure, monomer.

The protein resides in the cytoplasm. It carries out the reaction tRNA(Arg) + L-arginine + ATP = L-arginyl-tRNA(Arg) + AMP + diphosphate. The polypeptide is Arginine--tRNA ligase (Wigglesworthia glossinidia brevipalpis).